We begin with the raw amino-acid sequence, 407 residues long: Betaine--homocysteine S-methyltransferase 1 (407 aa).

Residues 11–314 form the Hcy-binding domain; it reads RGILERLNAG…YHIRAIAEEL (304 aa). Residues Lys40, Lys93, and Lys98 each carry the N6-succinyllysine modification. Residue Cys217 coordinates Zn(2+). An N6-succinyllysine mark is found at Lys232 and Lys241. Residues Cys299 and Cys300 each coordinate Zn(2+). A Phosphoserine modification is found at Ser330. N6-succinyllysine is present on residues Lys340 and Lys377.

In terms of assembly, homotetramer. Zn(2+) is required as a cofactor. Highly expressed in liver and kidney (at protein level). Expressed at lower levels in testis, lung, cerebellum, skeletal muscle and pancreas (at protein level).

It localises to the cytoplasm. The protein resides in the cytosol. It is found in the nucleus. The catalysed reaction is L-homocysteine + glycine betaine = N,N-dimethylglycine + L-methionine. It functions in the pathway amine and polyamine degradation; betaine degradation; sarcosine from betaine: step 1/2. The protein operates within amino-acid biosynthesis; L-methionine biosynthesis via de novo pathway; L-methionine from L-homocysteine (BhmT route): step 1/1. Involved in the regulation of homocysteine metabolism. Converts betaine and homocysteine to dimethylglycine and methionine, respectively. This reaction is also required for the irreversible oxidation of choline. This is Betaine--homocysteine S-methyltransferase 1 from Rattus norvegicus (Rat).